A 674-amino-acid chain; its full sequence is DNA ligase (674 aa).

Residues 34 to 38, 83 to 84, and Glu117 each bind NAD(+); these read DFEFD and SL. Lys119 acts as the N6-AMP-lysine intermediate in catalysis. The NAD(+) site is built by Arg140, Glu184, Lys297, and Lys321. Residues Cys415, Cys418, Cys433, and Cys439 each contribute to the Zn(2+) site. One can recognise a BRCT domain in the interval 598–674; sequence LVNTNFEGQS…IDEDEFERML (77 aa).

Belongs to the NAD-dependent DNA ligase family. LigA subfamily. Mg(2+) serves as cofactor. The cofactor is Mn(2+).

It carries out the reaction NAD(+) + (deoxyribonucleotide)n-3'-hydroxyl + 5'-phospho-(deoxyribonucleotide)m = (deoxyribonucleotide)n+m + AMP + beta-nicotinamide D-nucleotide.. Functionally, DNA ligase that catalyzes the formation of phosphodiester linkages between 5'-phosphoryl and 3'-hydroxyl groups in double-stranded DNA using NAD as a coenzyme and as the energy source for the reaction. It is essential for DNA replication and repair of damaged DNA. This is DNA ligase from Chlorobaculum parvum (strain DSM 263 / NCIMB 8327) (Chlorobium vibrioforme subsp. thiosulfatophilum).